The chain runs to 207 residues: MIOREX complex component 11 (207 aa).

The transit peptide at 1-46 (MTVMNLFFRPCQLQMGSGPLELMLKRPTQLTTFMNTRPGGSTQIRF) directs the protein to the mitochondrion. At 47 to 98 (ISGNLDPVKRREDRLRKIFSKSRLLTRLNKNPKFSHYFDRLSEAGTVPTLTS) the chain is on the mitochondrial matrix side. Residues 99–119 (FFILHEVTAILPLFLLWWLLY) traverse the membrane as a helical segment. The Mitochondrial intermembrane portion of the chain corresponds to 120–177 (NLDLSDDFKLPNFLNGLMDSCHTAMEKFVGKRYQECLNKNKLILSGTVAYVTVKLLYP). Residues 178–198 (VRIFISIWGAPYFGKWLLLPF) traverse the membrane as a helical segment. The Mitochondrial matrix segment spans residues 199–207 (QKLKHLIKK).

This sequence belongs to the MRX11 family. Associates with the mitochondrial ribosome.

The protein localises to the mitochondrion. Its subcellular location is the mitochondrion inner membrane. In terms of biological role, component of MIOREX complexes, large expressome-like assemblies of ribosomes with factors involved in all the steps of post-transcriptional gene expression. This is MIOREX complex component 11 from Saccharomyces cerevisiae (strain ATCC 204508 / S288c) (Baker's yeast).